The primary structure comprises 269 residues: MYIAKKKFGQNFLKDKNALNKIIESIPENAENIVEIGAGLGDLTYELLRKFKVKSYEIDKDLIEFLKSKFACELENRKFELVFGDALKFWKNGLCNKNYFLVANLPYYVATNMILKAIDDELCDGFVAMVQKEVAEKFCAESGDSEFGGISVLADIFGKCEFLFSVPADSFEPAPKVVSAVIRLKKTRKIDDIFENSVQYENFKNFLKICFSSPRKTIMKNLSTKFDKEILQSIFEKLDLTTNLRAHELNFTLFFKIFKNLRIRDERNK.

The S-adenosyl-L-methionine site is built by Asn11, Leu13, Gly37, Glu57, Asp85, and Asn104.

It belongs to the class I-like SAM-binding methyltransferase superfamily. rRNA adenine N(6)-methyltransferase family. RsmA subfamily.

It is found in the cytoplasm. It carries out the reaction adenosine(1518)/adenosine(1519) in 16S rRNA + 4 S-adenosyl-L-methionine = N(6)-dimethyladenosine(1518)/N(6)-dimethyladenosine(1519) in 16S rRNA + 4 S-adenosyl-L-homocysteine + 4 H(+). In terms of biological role, specifically dimethylates two adjacent adenosines (A1518 and A1519) in the loop of a conserved hairpin near the 3'-end of 16S rRNA in the 30S particle. May play a critical role in biogenesis of 30S subunits. This is Ribosomal RNA small subunit methyltransferase A from Campylobacter hominis (strain ATCC BAA-381 / DSM 21671 / CCUG 45161 / LMG 19568 / NCTC 13146 / CH001A).